A 523-amino-acid polypeptide reads, in one-letter code: Bifunctional purine biosynthesis protein PurH (523 aa).

Residues 1 to 152 (MSTDDGRRPI…KNHPSAAVVT (152 aa)) form the MGS-like domain.

Belongs to the PurH family.

It catalyses the reaction (6R)-10-formyltetrahydrofolate + 5-amino-1-(5-phospho-beta-D-ribosyl)imidazole-4-carboxamide = 5-formamido-1-(5-phospho-D-ribosyl)imidazole-4-carboxamide + (6S)-5,6,7,8-tetrahydrofolate. The catalysed reaction is IMP + H2O = 5-formamido-1-(5-phospho-D-ribosyl)imidazole-4-carboxamide. Its pathway is purine metabolism; IMP biosynthesis via de novo pathway; 5-formamido-1-(5-phospho-D-ribosyl)imidazole-4-carboxamide from 5-amino-1-(5-phospho-D-ribosyl)imidazole-4-carboxamide (10-formyl THF route): step 1/1. The protein operates within purine metabolism; IMP biosynthesis via de novo pathway; IMP from 5-formamido-1-(5-phospho-D-ribosyl)imidazole-4-carboxamide: step 1/1. The polypeptide is Bifunctional purine biosynthesis protein PurH (Mycobacterium bovis (strain BCG / Pasteur 1173P2)).